The chain runs to 361 residues: Caffeic acid 3-O-methyltransferase 1 (361 aa).

Residue Met-128 to Leu-134 participates in substrate binding. Positions Ala-160–Met-178 are substrate binding. The S-adenosyl-L-methionine site is built by Gly-206, Asp-229, Asp-249, Met-250, and Lys-263. Residue His-267 is the Proton acceptor of the active site.

Belongs to the class I-like SAM-binding methyltransferase superfamily. Cation-independent O-methyltransferase family. COMT subfamily. As to quaternary structure, homodimer.

It catalyses the reaction (E)-caffeate + S-adenosyl-L-methionine = (E)-ferulate + S-adenosyl-L-homocysteine + H(+). It functions in the pathway aromatic compound metabolism; phenylpropanoid biosynthesis. Functionally, catalyzes the conversion of caffeic acid to ferulic acid and of 5-hydroxyferulic acid to sinapic acid. The resulting products may subsequently be converted to the corresponding alcohols that are incorporated into lignins. This chain is Caffeic acid 3-O-methyltransferase 1 (COMT1), found in Ocimum basilicum (Sweet basil).